Here is a 291-residue protein sequence, read N- to C-terminus: Diaminopimelate epimerase (291 aa).

Substrate is bound by residues Asn-11 and Asn-78. The active-site Proton donor is the Cys-87. Substrate contacts are provided by residues 88–89 (GN), Asn-166, Asn-200, and 218–219 (ER). Cys-227 (proton acceptor) is an active-site residue. 228–229 (GT) is a substrate binding site.

Belongs to the diaminopimelate epimerase family. As to quaternary structure, homodimer.

The protein resides in the cytoplasm. The enzyme catalyses (2S,6S)-2,6-diaminopimelate = meso-2,6-diaminopimelate. It functions in the pathway amino-acid biosynthesis; L-lysine biosynthesis via DAP pathway; DL-2,6-diaminopimelate from LL-2,6-diaminopimelate: step 1/1. Functionally, catalyzes the stereoinversion of LL-2,6-diaminopimelate (L,L-DAP) to meso-diaminopimelate (meso-DAP), a precursor of L-lysine and an essential component of the bacterial peptidoglycan. This chain is Diaminopimelate epimerase, found in Mycolicibacterium smegmatis (strain ATCC 700084 / mc(2)155) (Mycobacterium smegmatis).